Consider the following 431-residue polypeptide: MAACSRGLVARPFDLTARGAAHWPCPAPRRRAIRCCCRAQQEPRRRLSKAAAAAPERTEEWRIDGNKPAAAARGRRRASLTAMPSLPFPSPRSRRQWKQQNFYPRCTPRGPAPQSRDTPPKRDTGIASEKEWGINLLDEAVKESGTNEDGSTWYRESGDDRGDNGYRCRWARMGGQSHDGTTEWKETWWEKSDWTGYKELGAEKSGKNGEGDSWWEKWKEVLYQDEWSNLARIERSAEKQAKSGAENAGWYEKWWEKYDAKGWTEKGAHKYGRLNEQSWWERWGEHYDGRGFVLKWTDKWAETDLGTKWGDKWEEKFFAGIGSRQGETWHVSPGGDRWSRTWGEEHFGNGKVHKYGKSTTGESWDLVVDEETYYEAEPHYGWADVVGDSTQLLSIQPVERPPGVYPTIDFSASSPAPPSDDPPGMPPSPLE.

Residues 1-19 (MAACSRGLVARPFDLTARG) constitute a chloroplast transit peptide. Disordered stretches follow at residues 65 to 126 (GNKP…DTGI) and 403 to 431 (GVYPTIDFSASSPAPPSDDPPGMPPSPLE). Over residues 415–431 (PAPPSDDPPGMPPSPLE) the composition is skewed to pro residues.

Belongs to the ESV1 family.

Its subcellular location is the plastid. It is found in the chloroplast stroma. In terms of biological role, binds preferentially to highly ordered alpha-glucans, such as starch and crystalline maltodextrins. Involved in the organization of the starch granule matrix, thus influencing starch turnover by modulating the accessibility of starch polymers to modifying and degrading enzymes. Required for the control of starch degradation in leaves and starch distribution in nonphotosynthetic parts. Promotes gravitropic responses, negative in shoots but positive in roots, by facilitating starch granules (statoliths) formation in hypocotyls and roots columella. Facilitates tight packing of starch granules in grains. In Oryza sativa subsp. japonica (Rice), this protein is Protein EARLY STARVATION 1, chloroplastic.